Here is a 419-residue protein sequence, read N- to C-terminus: Acyl-coenzyme A thioesterase 1 (419 aa).

Residues S232, D324, and H358 each act as charge relay system in the active site. S416 carries the post-translational modification Phosphoserine.

Belongs to the C/M/P thioester hydrolase family. Monomer. As to expression, expressed in heart, kidney, brown adipose tissue, white adipose tissue, adrenal gland and muscle.

It is found in the cytoplasm. The protein resides in the cytosol. It catalyses the reaction hexadecanoyl-CoA + H2O = hexadecanoate + CoA + H(+). The catalysed reaction is decanoyl-CoA + H2O = decanoate + CoA + H(+). It carries out the reaction dodecanoyl-CoA + H2O = dodecanoate + CoA + H(+). The enzyme catalyses tetradecanoyl-CoA + H2O = tetradecanoate + CoA + H(+). It catalyses the reaction octadecanoyl-CoA + H2O = octadecanoate + CoA + H(+). The catalysed reaction is eicosanoyl-CoA + H2O = eicosanoate + CoA + H(+). It carries out the reaction (9Z)-octadecenoyl-CoA + H2O = (9Z)-octadecenoate + CoA + H(+). The enzyme catalyses (9Z)-hexadecenoyl-CoA + H2O = (9Z)-hexadecenoate + CoA + H(+). It catalyses the reaction (9E)-octadecenoyl-CoA + H2O = (9E)-octadecenoate + CoA + H(+). It participates in lipid metabolism; fatty acid metabolism. In terms of biological role, catalyzes the hydrolysis of acyl-CoAs into free fatty acids and coenzyme A (CoASH), regulating their respective intracellular levels. More active towards saturated and unsaturated long chain fatty acyl-CoAs (C12-C20). The protein is Acyl-coenzyme A thioesterase 1 (Acot1) of Mus musculus (Mouse).